A 588-amino-acid chain; its full sequence is MKFSLVTDAFEKMSKTTKRTELTEILVELLKSADEDLQSLVYLIEGKLAPDYQGIETQMSDKLIIKALSIVSNIPEEAVSETYSKLGDIGSVAREIAAKKNMRSLVNEDLTVKYVHDTLMRMAKTSGSGSTKARIDAYVDLALSGTPADLMYITRIITGKLRIGVSDATILDAIILAFSDEKYSEEIENAYNFHPDLGYIAVQLRLGNLESVINMGPTPMVPFKVMLAERLRSVDEIVQKMNGKCAFEYKYDGMRTEIHIVDEKVRLFSRGNEETTGQFPDIVKSAKETFHVSSVILDGEAVPYNPETGELYPFQVISQRRGRKYDLDKVSNEIPITVFLFDIVYINGKDLSKTPYAERRRILEGLFKENDNFKLAKRIVSSDTGTITKFFNQAIEDGCEGLVAKSMADDSYYKAGARGWLWIKLKRDYQAQLWDTIDLTVVGAFMGHGRRSGTYGALLLATYNEKNDTFETVCKLGSGFTDDVLFSLPKRFAEFVSKEKPARVVSTIEPDVWIYPSIVMEIIGAEITISPVHTCAFGIIEKDAGLSIRFPRFTGKWRDDKKPEDSTTTQEIIEMYKEQKKTLTEEKS.

Glutamate 248 lines the ATP pocket. The active-site N6-AMP-lysine intermediate is the lysine 250. Residues arginine 255, arginine 270, glutamate 300, phenylalanine 341, arginine 418, and lysine 424 each coordinate ATP.

It belongs to the ATP-dependent DNA ligase family. Requires Mg(2+) as cofactor.

The catalysed reaction is ATP + (deoxyribonucleotide)n-3'-hydroxyl + 5'-phospho-(deoxyribonucleotide)m = (deoxyribonucleotide)n+m + AMP + diphosphate.. Functionally, DNA ligase that seals nicks in double-stranded DNA during DNA replication, DNA recombination and DNA repair. The chain is DNA ligase from Thermoplasma volcanium (strain ATCC 51530 / DSM 4299 / JCM 9571 / NBRC 15438 / GSS1).